Reading from the N-terminus, the 809-residue chain is Ribonuclease Z 1 (809 aa).

Residues 74–93 form a disordered region; the sequence is ISSPDTYDSSSSSSTTSVSD.

The protein belongs to the RNase Z family. The cofactor is Zn(2+).

It is found in the nucleus. The protein resides in the cytoplasm. The enzyme catalyses Endonucleolytic cleavage of RNA, removing extra 3' nucleotides from tRNA precursor, generating 3' termini of tRNAs. A 3'-hydroxy group is left at the tRNA terminus and a 5'-phosphoryl group is left at the trailer molecule.. Functionally, zinc phosphodiesterase, which displays some tRNA 3'-processing endonuclease activity. May be involved in tRNA maturation, by removing a 3'-trailer from precursor tRNA. This is Ribonuclease Z 1 (trz1) from Schizosaccharomyces pombe (strain 972 / ATCC 24843) (Fission yeast).